The primary structure comprises 290 residues: Phosphatidylglycerol--prolipoprotein diacylglyceryl transferase (290 aa).

A run of 7 helical transmembrane segments spans residues 21 to 41 (VSLH…MWLA), 60 to 80 (LLYA…VLFY), 98 to 118 (GGMS…WFAH), 124 to 144 (FFQV…AGRL), 198 to 218 (SQLY…NLFI), 224 to 244 (IGSV…LVEF), and 258 to 278 (VISM…IMMA). Arg-143 is a binding site for a 1,2-diacyl-sn-glycero-3-phospho-(1'-sn-glycerol).

The protein belongs to the Lgt family.

It is found in the cell inner membrane. It catalyses the reaction L-cysteinyl-[prolipoprotein] + a 1,2-diacyl-sn-glycero-3-phospho-(1'-sn-glycerol) = an S-1,2-diacyl-sn-glyceryl-L-cysteinyl-[prolipoprotein] + sn-glycerol 1-phosphate + H(+). It participates in protein modification; lipoprotein biosynthesis (diacylglyceryl transfer). Catalyzes the transfer of the diacylglyceryl group from phosphatidylglycerol to the sulfhydryl group of the N-terminal cysteine of a prolipoprotein, the first step in the formation of mature lipoproteins. This Sodalis glossinidius (strain morsitans) protein is Phosphatidylglycerol--prolipoprotein diacylglyceryl transferase.